Here is a 143-residue protein sequence, read N- to C-terminus: Myosin 1 light chain cam2 (143 aa).

3 EF-hand domains span residues 6–41 (EQTDEMKEAFVLYDIDKDGLIPTSHVGSVLRSLGIN), 75–110 (ESEEEYIKAFRVFDKDNSGYIETAKFADYMKTLGEK), and 111–143 (LSDNEVQLMVQEADPTNSGSFDYYDFVQRIMAK).

Belongs to the calmodulin family. As to quaternary structure, interacts with myo1 and pik1.

It localises to the cytoplasm. The protein resides in the prospore membrane. Plays a role in meiosis and sporulation. The chain is Myosin 1 light chain cam2 from Schizosaccharomyces pombe (strain 972 / ATCC 24843) (Fission yeast).